Reading from the N-terminus, the 610-residue chain is Protein Spindly-B (610 aa).

A coiled-coil region spans residues 1–392 (MEESETVLKL…IDKVKDELSL (392 aa)). Residues 474–610 (TEAHGVSDAT…KPATAQCPQQ (137 aa)) form a disordered region. Composition is skewed to basic and acidic residues over residues 493–511 (SDDKKLPKEDLSLSTKDQD) and 535–548 (RIMEDEKDTPDLNK). A compositionally biased stretch (polar residues) spans 549 to 561 (RNPNNCTITSIHP). Positions 570 to 583 (SELKKVDEEQEKRK) are enriched in basic and acidic residues.

It belongs to the Spindly family.

It localises to the chromosome. Its subcellular location is the centromere. The protein resides in the kinetochore. Required for the localization of dynein and dynactin to the mitotic kintochore. Dynein is believed to control the initial lateral interaction between the kinetochore and spindle microtubules and to facilitate the subsequent formation of end-on kinetochore-microtubule attachments mediated by the NDC80 complex. The chain is Protein Spindly-B (spdl1-b) from Xenopus laevis (African clawed frog).